The following is a 424-amino-acid chain: tRNA (guanine-N(7)-)-methyltransferase non-catalytic subunit wuho (424 aa).

Residues 42 to 92 (LKGHTSQSQESCTAAAAASTATAASGQAPGGKEQQLANQPEEGGTSASASG) form a disordered region. Positions 46–68 (TSQSQESCTAAAAASTATAASGQ) are enriched in low complexity. WD repeat units follow at residues 96-137 (ATST…ARLL), 184-223 (GHLSVVYDILWSEDQQHIITCDRDDKIRVTNYPATFDIHS), 227-265 (GHREFVSGLALLTEQHIASASGDKTLRVWNYIQGKELLQ), and 324-364 (AGSW…PASS).

Belongs to the WD repeat TRM82 family. As to quaternary structure, forms a heterodimer with the catalytic subunit Mettl1. Interacts with mei-P26 and weakly interacts with bgcn; required for the function or formation of the mei-P26-bgcn-bam-sxl complex. Interacts with nanos; may be involved in mei-P26-dependent derepression of the BMP signaling pathway. Interacts with Myc; the interaction may be mediated by mei-P26 and may be involved in the regulation of ribosome biogenesis. As to expression, in testis, it is present at high level in hub cells, a niche for germline stem cells of testis. Ubiquitously expressed in all testicular cells throughout spermatogenesis. Ubiquitously expressed in all germline and somatic cells of the ovary.

It is found in the nucleus. The protein resides in the cytoplasm. It participates in tRNA modification; N(7)-methylguanine-tRNA biosynthesis. In terms of biological role, required for the Mettl1-dependent formation of N(7)-methylguanine at position 46 (m7G46) in tRNA. In the Mettl1-wuho methyltransferase complex, it is required to stabilize and induce conformational changes of the catalytic subunit. Required for binding of nanos mRNA and repression of translation by the mei-P26-bgcn-bam-sxl complex. May cooperate with mei-P26 and nanos to derepress the BMP signaling pathway. May cooperate with mei-P26 to suppress expression of a subset of microRNAs. May cooperate with mei-P26 to regulate bam expression levels in germline cells during gametogenesis. Required to promote mitosis to meiosis transition during gametogenesis. May regulate germline cell division in part by regulating ribosome biogenesis. The polypeptide is tRNA (guanine-N(7)-)-methyltransferase non-catalytic subunit wuho (Drosophila melanogaster (Fruit fly)).